Consider the following 955-residue polypeptide: 2-oxoglutarate dehydrogenase E1 component (955 aa).

It belongs to the alpha-ketoglutarate dehydrogenase family. In terms of assembly, homodimer. Part of the 2-oxoglutarate dehydrogenase (OGDH) complex composed of E1 (2-oxoglutarate dehydrogenase), E2 (dihydrolipoamide succinyltransferase) and E3 (dihydrolipoamide dehydrogenase); the complex contains multiple copies of the three enzymatic components (E1, E2 and E3). The cofactor is thiamine diphosphate.

The enzyme catalyses N(6)-[(R)-lipoyl]-L-lysyl-[protein] + 2-oxoglutarate + H(+) = N(6)-[(R)-S(8)-succinyldihydrolipoyl]-L-lysyl-[protein] + CO2. E1 component of the 2-oxoglutarate dehydrogenase (OGDH) complex which catalyzes the decarboxylation of 2-oxoglutarate, the first step in the conversion of 2-oxoglutarate to succinyl-CoA and CO(2). The protein is 2-oxoglutarate dehydrogenase E1 component of Bacillus cereus (strain ATCC 14579 / DSM 31 / CCUG 7414 / JCM 2152 / NBRC 15305 / NCIMB 9373 / NCTC 2599 / NRRL B-3711).